The following is a 1303-amino-acid chain: Protein STU1 (1303 aa).

Disordered regions lie at residues 239–259, 531–664, and 953–977; these read RGSD…NTPV, SQRE…GAVS, and EASD…NSEH. Polar residues predominate over residues 249 to 259; sequence RANTPRSNTPV. Positions 554 to 568 are enriched in basic and acidic residues; it reads SLKEAILEKNKELRQ. Residues 573 to 583 show a composition bias toward polar residues; that stretch reads SRNSGEQSTKI. Residues 596–609 show a composition bias toward basic and acidic residues; the sequence is SRLEKSLLRPDVGH. Over residues 618-629 the composition is skewed to polar residues; it reads SSWTYPSTQSGP. Residues 634–648 show a composition bias toward basic and acidic residues; that stretch reads KQRERSKTEVHKKSP. Composition is skewed to polar residues over residues 653–664 and 955–972; these read RPSSRLDTGAVS and SDSS…SSKR.

Belongs to the CLASP family. In terms of assembly, interacts with microtubules.

It is found in the cytoplasm. The protein resides in the cytoskeleton. The protein localises to the nucleus. Its subcellular location is the spindle. Its function is as follows. Microtubule binding protein that promotes the stabilization of dynamic microtubules. Required for mitotic spindle formation. The sequence is that of Protein STU1 (STU1) from Candida albicans (strain SC5314 / ATCC MYA-2876) (Yeast).